We begin with the raw amino-acid sequence, 314 residues long: Short-chain dehydrogenase/reductase drtF (314 aa).

Residues Val26, Lys50, Asp73, Asn100, Tyr185, and Lys189 each coordinate NADP(+). Tyr185 (proton acceptor) is an active-site residue. Catalysis depends on Lys189, which acts as the Lowers pKa of active site Tyr.

Belongs to the short-chain dehydrogenases/reductases (SDR) family.

Its pathway is secondary metabolite biosynthesis; terpenoid biosynthesis. Functionally, short-chain dehydrogenase/reductase; part of the gene cluster that mediates the biosynthesis of various drimane-type sesquiterpene esters, compounds that exhibit diverse biological activities and are widely present in eukaryotes. The pathway begins with the synthesis of the backbone drimenol by the terpene cyclase drtB using farnesyl pyrophosphate (FPP) as substrate. The cytochrome P450 monooxygenase drtD is then responsible for the hydroxylations at C-6, C-9 and C-12, as well as the oxidation of hydroxyl groups at C-6 and C-11 to a ketone and an aldehyde, respectively. Then, the biosynthesis can go in two directions, either the hydroxylated drimenol is further hydroxylated at C-2 and C-3 by an enzyme(s) not associated with the drt cluster, or the FAD-binding oxidoreductase drtC further oxidizes C-11 or C-12 to form the butyrolactone ring. DrtB, drtD and drtC are solely responsible for the formation of the different drimane structures observed during drimane sesquiterpenes biosynthesis. The polyketide synthase drtA synthesizes different lengths (C6 and C8) of PKS chains, which are then oxidized to varying degrees by the short-chain dehydrogenase drtF. Finally, these PKS chains are transferred onto drimane sesquiterpenes by the acyltransferase drtE, forming the sesquiterpene esters. In addition to the different fatty acyl-CoA chains produced by drtA, drtE is also able to use cinnamoyl-CoA as a substrate. This is Short-chain dehydrogenase/reductase drtF from Aspergillus calidoustus.